A 442-amino-acid polypeptide reads, in one-letter code: Protein PhoH2 (442 aa).

The PINc domain maps to 3–135 (KIYVLDTNVL…LVSKDVLVRV (133 aa)). 259 to 266 (GKAGTGKT) is an ATP binding site.

This sequence in the N-terminal section; belongs to the PINc/VapC protein family. The protein in the C-terminal section; belongs to the PhoH family.

The enzyme catalyses n ATP + n H2O + wound RNA = n ADP + n phosphate + unwound RNA.. It carries out the reaction ATP + H2O = ADP + phosphate + H(+). The catalysed reaction is GTP + H2O = GDP + phosphate + H(+). Its function is as follows. Unwinds and/or cleaves 5'-tailed RNA in vitro. Has ATPase and GTPase activities. Unlike the protein in mycobacteria there does not seem to be an antitoxin gene upstream, suggesting this is not a toxin-antitoxin system. This chain is Protein PhoH2, found in Bacillus subtilis (strain 168).